We begin with the raw amino-acid sequence, 342 residues long: Ubiquitin fusion degradation protein 1 homolog (342 aa).

Disordered regions lie at residues 245-276 (FGGAGRRLDGKKKPSSSVSLSDGTGVSTSNAA) and 318-342 (EKEASKAGQPSNVFRGGNRTLRGAR). Residues 259–275 (SSSVSLSDGTGVSTSNA) are compositionally biased toward polar residues.

The protein belongs to the UFD1 family. In terms of assembly, forms a complex composed of ubxn-3, ufd-1, npl-4.1 and cdc-48.1; within the complex interacts with cdc-48.1. Interacts with cdc-48.2. Interacts with npl-4.1 and/or npl-4.2.

It is found in the cytoplasm. Its subcellular location is the nucleus. Its function is as follows. Functions at a post-ubiquitination step in the ubiquitin fusion degradation (UFD) pathway. In association with npl-4.1 and/or npl-4.2 and ATPase cdc-48.1 and/or cdc-48.2, involved in the cytoplasmic elimination of misfolded proteins exported from the ER. This pathway, known as ERAD, prevents the activation of the unfolded protein response (UPR) caused by the accumulation of misfolded proteins in the ER. During S phase and in association with npl-4.1 and/or npl-4.2, cdc-48.1 and/or cdc-48.2 and ubxn-3, ensures the degradation of DNA licensing factor cdt-1 after the initiation of DNA replication and thus the disassembly of the DNA replication CMG helicase complex by promoting the dissociation from chromatin of several of its components including cdc-45 and sld-5. Regulates ubxn-3 nuclear localization during S phase. The protein is Ubiquitin fusion degradation protein 1 homolog (ufd-1) of Caenorhabditis elegans.